The following is a 267-amino-acid chain: NADP-dependent mannitol dehydrogenase (267 aa).

The NADP(+) site is built by N108 and K141. The active-site Proton donor is the S160. Residues Y175, K179, I207, and T209 each contribute to the NADP(+) site. Residue Y175 is the Proton acceptor of the active site. The active-site Lowers pKa of active site Tyr is K179.

The protein belongs to the short-chain dehydrogenases/reductases (SDR) family. As to quaternary structure, exists as monomer, dimer and tetramer.

The catalysed reaction is D-mannitol + NADP(+) = D-fructose + NADPH + H(+). Functionally, interconverts D-mannitol and D-fructose. Not active with fructose 6-phosphate or NADH. The chain is NADP-dependent mannitol dehydrogenase from Davidiella tassiana (Mycosphaerella tassiana).